We begin with the raw amino-acid sequence, 497 residues long: Alkene monooxygenase system, oxygenase component subunit alpha (497 aa).

The Fe cation site is built by Glu104, Glu134, His137, Glu197, Glu231, and His234.

This sequence belongs to the TmoA/XamoA family. As to quaternary structure, the alkene monooxygenase multicomponent enzyme system is composed of an electron transfer component and a monooxygenase component interacting with the effector protein XamoD. The electron transfer component is composed of a ferredoxin reductase (XamoF) and a ferredoxin (XamoC), and the monooxygenase component is formed by a heterohexamer (dimer of heterotrimers) of two alpha subunits (XamoA), two beta subunits (XamoE) and two gamma subunits (XamoB). It depends on Fe(2+) as a cofactor.

Its subcellular location is the cytoplasm. The catalysed reaction is propene + NADH + O2 + H(+) = 1,2-epoxypropane + NAD(+) + H2O. Its activity is regulated as follows. Inhibited by propyne. Functionally, component of the alkene monooxygenase multicomponent enzyme system which catalyzes the O2- and NADH-dependent epoxidation of short chain (C2 to C6) alkenes to their corresponding epoxides. Also able to catalyze the oxidation of a number of chlorinated alkenes, including trichloroethylene, cis- and trans-1,2-dichloroethylene, vinyl chloride, 1-chloropropylene, 1,3-dichloropropylene and 2,3-dichloropropylene. This chain is Alkene monooxygenase system, oxygenase component subunit alpha, found in Xanthobacter autotrophicus (strain ATCC BAA-1158 / Py2).